A 402-amino-acid chain; its full sequence is Adenylyltransferase and sulfurtransferase MOCS3 (402 aa).

Residues G47, D68, 75 to 79 (DNLHR), K92, and 136 to 137 (DN) contribute to the ATP site. Positions 178 and 181 each coordinate Zn(2+). The Glycyl thioester intermediate; for adenylyltransferase activity role is filled by C195. C253 and C256 together coordinate Zn(2+). In terms of domain architecture, Rhodanese spans 303-400 (AARKQFLLDT…WALKINDEFP (98 aa)). C359 acts as the Cysteine persulfide intermediate; for sulfurtransferase activity in catalysis.

This sequence in the N-terminal section; belongs to the HesA/MoeB/ThiF family. UBA4 subfamily. Zn(2+) serves as cofactor.

It localises to the cytoplasm. It is found in the cytosol. The catalysed reaction is [molybdopterin-synthase sulfur-carrier protein]-C-terminal Gly-Gly + ATP + H(+) = [molybdopterin-synthase sulfur-carrier protein]-C-terminal Gly-Gly-AMP + diphosphate. It carries out the reaction [molybdopterin-synthase sulfur-carrier protein]-C-terminal Gly-Gly-AMP + S-sulfanyl-L-cysteinyl-[cysteine desulfurase] + AH2 = [molybdopterin-synthase sulfur-carrier protein]-C-terminal-Gly-aminoethanethioate + L-cysteinyl-[cysteine desulfurase] + A + AMP + 2 H(+). The protein operates within tRNA modification; 5-methoxycarbonylmethyl-2-thiouridine-tRNA biosynthesis. It participates in cofactor biosynthesis; molybdopterin biosynthesis. Its function is as follows. Plays a central role in 2-thiolation of mcm(5)S(2)U at tRNA wobble positions of cytosolic tRNA(Lys), tRNA(Glu) and tRNA(Gln). Also essential during biosynthesis of the molybdenum cofactor. Acts by mediating the C-terminal thiocarboxylation of sulfur carriers URM1 and MOCS2A. Its N-terminus first activates URM1 and MOCS2A as acyl-adenylates (-COAMP), then the persulfide sulfur on the catalytic cysteine is transferred to URM1 and MOCS2A to form thiocarboxylation (-COSH) of their C-terminus. The reaction probably involves hydrogen sulfide that is generated from the persulfide intermediate and that acts as a nucleophile towards URM1 and MOCS2A. Subsequently, a transient disulfide bond is formed. Does not use thiosulfate as sulfur donor; NFS1 probably acting as a sulfur donor for thiocarboxylation reactions. The chain is Adenylyltransferase and sulfurtransferase MOCS3 from Caenorhabditis briggsae.